The following is a 380-amino-acid chain: Endonuclease III homolog 2 (380 aa).

The Nuclear localization signal motif lies at 8–12 (RKRKH). The segment at 15 to 40 (VDIEEVEVRSKYFKKNERTVELVKEN) is interaction with MLH1. Residue lysine 194 forms a Glycyl lysine isopeptide (Lys-Gly) (interchain with G-Cter in SUMO) linkage. In terms of domain architecture, HhH spans 228–252 (FDSDIPYDIEGILSLPGVGPKMGYL). The Nucleophile; for N-glycosylase activity role is filled by lysine 248. Positions 319, 326, 329, and 335 each coordinate [4Fe-4S] cluster. Positions 376 to 380 (RHKKK) match the Nuclear localization signal motif.

Belongs to the Nth/MutY family. In terms of assembly, interacts with MLH1. [4Fe-4S] cluster is required as a cofactor. Post-translationally, monosumoylated.

Its subcellular location is the nucleus. The enzyme catalyses 2'-deoxyribonucleotide-(2'-deoxyribose 5'-phosphate)-2'-deoxyribonucleotide-DNA = a 3'-end 2'-deoxyribonucleotide-(2,3-dehydro-2,3-deoxyribose 5'-phosphate)-DNA + a 5'-end 5'-phospho-2'-deoxyribonucleoside-DNA + H(+). Functionally, bifunctional DNA N-glycosylase with associated apurinic/apyrimidinic (AP) lyase function that catalyzes the first step in base excision repair (BER), the primary repair pathway for the repair of oxidative DNA damage. The DNA N-glycosylase activity releases the damaged DNA base from DNA by cleaving the N-glycosidic bond, leaving an AP site. The AP-lyase activity cleaves the phosphodiester bond 3' to the AP site by a beta-elimination. Primarily recognizes and repairs oxidative base damage of pyrimidines, but also purine-derived lesions, alkylation damage as well as abasic sites. Can also repair the oxidation products of 8-oxoguanine. The chain is Endonuclease III homolog 2 (NTG2) from Saccharomyces cerevisiae (strain ATCC 204508 / S288c) (Baker's yeast).